The primary structure comprises 406 residues: Phosphoglycerate kinase (406 aa).

Residues 22 to 24, R37, 60 to 63, R119, and R152 contribute to the substrate site; these read DLN and HLGN. ATP is bound by residues K202, E325, and 355 to 358; that span reads GGDT.

The protein belongs to the phosphoglycerate kinase family. Monomer.

The protein resides in the cytoplasm. The enzyme catalyses (2R)-3-phosphoglycerate + ATP = (2R)-3-phospho-glyceroyl phosphate + ADP. It functions in the pathway carbohydrate degradation; glycolysis; pyruvate from D-glyceraldehyde 3-phosphate: step 2/5. In Orientia tsutsugamushi (strain Ikeda) (Rickettsia tsutsugamushi), this protein is Phosphoglycerate kinase.